The sequence spans 361 residues: Anhydro-N-acetylmuramic acid kinase (361 aa).

10–17 (GTSLDGVD) lines the ATP pocket.

The protein belongs to the anhydro-N-acetylmuramic acid kinase family.

It carries out the reaction 1,6-anhydro-N-acetyl-beta-muramate + ATP + H2O = N-acetyl-D-muramate 6-phosphate + ADP + H(+). It functions in the pathway amino-sugar metabolism; 1,6-anhydro-N-acetylmuramate degradation. It participates in cell wall biogenesis; peptidoglycan recycling. Functionally, catalyzes the specific phosphorylation of 1,6-anhydro-N-acetylmuramic acid (anhMurNAc) with the simultaneous cleavage of the 1,6-anhydro ring, generating MurNAc-6-P. Is required for the utilization of anhMurNAc either imported from the medium or derived from its own cell wall murein, and thus plays a role in cell wall recycling. This Gluconobacter oxydans (strain 621H) (Gluconobacter suboxydans) protein is Anhydro-N-acetylmuramic acid kinase.